We begin with the raw amino-acid sequence, 1384 residues long: MIKNLKQKIKNRFSYSLLSEDDNTDYFSKPCPEDNATLWQRFTFGWTERMLMTGYFNGPLEMKDVSDLPDRNKVNITAPFLDTIDYNSKYPLIKQIYKEFVSRNKISVATKIFVAIVSILSPLCLKYFIYYIKLDESQKTFKFGFLLCVLLFLSSLSLTLSQQYGYWFGLQTSLHARGAITQKIFEKTLRLSNQAKRLYNSGTIMNIISVDVGTFSDFFWNNHIEIFVFPFQILALLILLCWIVGLSGLVGFGVMVVSIPLCTFLSTKIAKNLRISLGYADTRCNLTSEFINGIRFLKLYAWEQLFLDRIEEQRTLQLKYLYRRAIYWILDRMITQVTSALVLVATFSTYALTGNQMTLEVAFTAMTIFVNLRRPLEMLPEAIHRALSLIPSSKRIENFLQSPEIQDQPFLEQYSNNKLSIRNNNNNNNNVSSTSSIASSASSNELFDVKINNGTFDWNEIDDLDSGMIINDVRGFAISSDINDMDEMILGDEKVGKSNDTNNGIEYDGAVQPSSSSYVLNNINFIAPAGKLTVICGIVGSGKTSLVSGLIGEIYRVSGSVNIPNNISFTTQQPFLLSTSLRDNILFGKPMNMERYKKVIDACCLTPDLLQLAAKDLTEIGERGINLSGGQKQRISLARALYSDSDCFILDEPLSAVDPEVASHLFDHCIQGMMKDKTRILVTHQLQFIPSADHIIVVDNGVLTQGTYSELKEKGIDFESIMKTKKLNIDENDQSSTSTTDKKSSTSSSSSELKKSTSLLNSTKELDINTIISEKNDPNLIEKAKLLVKEDRNEGEVGFEVYRQYFRHGSLNLFFLTCALYFISQIIFQLSDFWLTIWTNDETNQHDDKYYILYYCIFIGAFIVFLVVRYFMMASITFAASKKLHSELLNSVAFASCQFFDTNPSGRILNRFSKDISDIDLILMENFSDVLQCGSTVVVALFMMIYITPLISIPFAILVVVYYVIQKLYRASSVELKRMESITRSPVFSLLAEAYNGLVTIRCYQQQKRFIEMMQNHININLRLFFYSFSVHRWVGIRLEFITALIVFFTAFSSLFSSNTGFSVLAVTTALGICSYLNWTIRQMTELEVKMNSVERVESYIKTPREGIRHTSEFEDEIDIDGEIEMDFTKWPSRGEVEFKNVEIKYRPTADPSLKNISFKINAKDHIGVVGRTGAGKSTVGISLFRMVECSKGSIFIDGVDISKVGLHELRDALGIVPQDPFIFSGSIRMNIDPFNKYTDDEIWTALEKVKLKDAISSMPLKLESGVQENGDGLSFGQKQLLCLSRTILKNSKVVLMDEATSGIDYVTAALLKQTIDENFNDCTMLTIAHRLDTIIDSTKIAVIDKGELVEYDTPMNLIKTEGSRFKKLVKYQTDFYEESQKKF.

An ABC transmembrane type-1 1 domain is found at N104 to S388. The next 5 helical transmembrane spans lie at I112 to I132, T140 to L160, I226 to L246, S247 to T267, and M333 to T353. The ABC transporter 1 domain maps to I505–T724. G537–T544 contacts ATP. The interval I729–S756 is disordered. Over residues S735–S756 the composition is skewed to low complexity. 5 helical membrane passes run L813–F833, I852–M872, L941–V961, G1036–F1056, and G1061–I1081. In terms of domain architecture, ABC transmembrane type-1 2 spans F814–S1093. Positions V1137 to K1371 constitute an ABC transporter 2 domain. G1171–S1178 contacts ATP.

The protein belongs to the ABC transporter superfamily. ABCC family. Conjugate transporter (TC 3.A.1.208) subfamily.

Its subcellular location is the membrane. The chain is ABC transporter C family member 2 (abcC2) from Dictyostelium discoideum (Social amoeba).